Here is a 270-residue protein sequence, read N- to C-terminus: Glucosamine-6-phosphate deaminase (270 aa).

The active-site Proton acceptor; for enolization step is the Asp72. The active-site For ring-opening step is the Asp141. Catalysis depends on His143, which acts as the Proton acceptor; for ring-opening step. The For ring-opening step role is filled by Glu148.

It belongs to the glucosamine/galactosamine-6-phosphate isomerase family. NagB subfamily. Homohexamer.

It carries out the reaction alpha-D-glucosamine 6-phosphate + H2O = beta-D-fructose 6-phosphate + NH4(+). It participates in amino-sugar metabolism; N-acetylneuraminate degradation; D-fructose 6-phosphate from N-acetylneuraminate: step 5/5. Its activity is regulated as follows. Allosterically activated by N-acetylglucosamine 6-phosphate (GlcNAc6P). Catalyzes the reversible isomerization-deamination of glucosamine 6-phosphate (GlcN6P) to form fructose 6-phosphate (Fru6P) and ammonium ion. In Haemophilus influenzae (strain 86-028NP), this protein is Glucosamine-6-phosphate deaminase.